The sequence spans 434 residues: Methylenetetrahydrofolate--tRNA-(uracil-5-)-methyltransferase TrmFO (434 aa).

9 to 14 is a binding site for FAD; that stretch reads GAGLAG.

The protein belongs to the MnmG family. TrmFO subfamily. FAD is required as a cofactor.

The protein resides in the cytoplasm. It catalyses the reaction uridine(54) in tRNA + (6R)-5,10-methylene-5,6,7,8-tetrahydrofolate + NADH + H(+) = 5-methyluridine(54) in tRNA + (6S)-5,6,7,8-tetrahydrofolate + NAD(+). It carries out the reaction uridine(54) in tRNA + (6R)-5,10-methylene-5,6,7,8-tetrahydrofolate + NADPH + H(+) = 5-methyluridine(54) in tRNA + (6S)-5,6,7,8-tetrahydrofolate + NADP(+). Functionally, catalyzes the folate-dependent formation of 5-methyl-uridine at position 54 (M-5-U54) in all tRNAs. This chain is Methylenetetrahydrofolate--tRNA-(uracil-5-)-methyltransferase TrmFO, found in Listeria monocytogenes serovar 1/2a (strain ATCC BAA-679 / EGD-e).